The chain runs to 138 residues: MAEEHQNRLQNAVDSMVKSLERDNIRKMQGKMFRCSAQCCEDNGASMQQVHHCIERCHTPLAQAQSLVTTELERFQNRLSRCTMNCSDQAKDAFDSGSKEAQVKAQLEGCVIKCAEEHMNLIPSMTKKLKDALAQADK.

It belongs to the FAM136 family.

This chain is Protein FAM136A (fam136a), found in Xenopus laevis (African clawed frog).